Here is a 644-residue protein sequence, read N- to C-terminus: Magnetosome protein MamZ (644 aa).

Residues 1-427 (MPRNAEAPAK…YAAWLLANGI (427 aa)) form a major facilitator domain region. Helical transmembrane passes span 22 to 42 (WNII…SISI), 63 to 83 (ADIQ…FGLL), 92 to 112 (IIAL…LSLQ), 113 to 133 (VGLA…VLLT), 159 to 179 (LMGN…AIVM), 185 to 205 (PGGV…GFQL), 254 to 274 (VIIL…LVGV), 281 to 301 (AHAA…VPLW), 311 to 331 (ISAI…LGMF), 337 to 357 (WLVA…FVTL), 369 to 389 (ILGA…VMLV), 403 to 423 (APFI…AWLL), 440 to 460 (TVDW…WLVG), 478 to 498 (VGFV…ISLA), 518 to 538 (IGLF…ALEW), 553 to 573 (PFIL…FTSA), 588 to 608 (LHSA…LAAN), and 612 to 629 (GEPY…WYRF). Residues 488 to 599 (WAFTFLIISL…SATYVINALV (112 aa)) form a ferric reductase-like domain region.

The protein in the N-terminal section; belongs to the major facilitator superfamily.

It is found in the magnetosome membrane. Its function is as follows. Required for correct biomineralization of the magnetosome; probably converts and then transports some form of iron. It is partially functionally redundant with MamH. May function with MamX, MamY amd Mms6. In Paramagnetospirillum magneticum (strain ATCC 700264 / AMB-1) (Magnetospirillum magneticum), this protein is Magnetosome protein MamZ.